The sequence spans 61 residues: DNA-directed RNA polymerase subunit Rpo6 (61 aa).

Belongs to the archaeal Rpo6/eukaryotic RPB6 RNA polymerase subunit family. In terms of assembly, part of the RNA polymerase complex.

It localises to the cytoplasm. The catalysed reaction is RNA(n) + a ribonucleoside 5'-triphosphate = RNA(n+1) + diphosphate. In terms of biological role, DNA-dependent RNA polymerase (RNAP) catalyzes the transcription of DNA into RNA using the four ribonucleoside triphosphates as substrates. This chain is DNA-directed RNA polymerase subunit Rpo6, found in Thermoplasma volcanium (strain ATCC 51530 / DSM 4299 / JCM 9571 / NBRC 15438 / GSS1).